A 250-amino-acid chain; its full sequence is Small ribosomal subunit protein uS2 (250 aa).

It belongs to the universal ribosomal protein uS2 family.

The sequence is that of Small ribosomal subunit protein uS2 from Acidovorax ebreus (strain TPSY) (Diaphorobacter sp. (strain TPSY)).